The following is a 211-amino-acid chain: Transcription antitermination protein NusB (211 aa).

The disordered stretch occupies residues 152–211 (PAKKERVANPFPSTPPKKPENVPNPFSTPFKKNSSEPIRNPFEGNKSPQPPQKTLRRKKK). The span at 175 to 188 (NPFSTPFKKNSSEP) shows a compositional bias: polar residues.

This sequence belongs to the NusB family.

Functionally, involved in transcription antitermination. Required for transcription of ribosomal RNA (rRNA) genes. Binds specifically to the boxA antiterminator sequence of the ribosomal RNA (rrn) operons. This is Transcription antitermination protein NusB from Chloroherpeton thalassium (strain ATCC 35110 / GB-78).